The following is a 73-amino-acid chain: Putative membrane protein insertion efficiency factor (73 aa).

This sequence belongs to the UPF0161 family.

The protein localises to the cell inner membrane. Could be involved in insertion of integral membrane proteins into the membrane. The protein is Putative membrane protein insertion efficiency factor of Parabacteroides distasonis (strain ATCC 8503 / DSM 20701 / CIP 104284 / JCM 5825 / NCTC 11152).